The sequence spans 219 residues: Transmembrane protein 179B (219 aa).

The next 4 membrane-spanning stretches (helical) occupy residues 9–29, 65–85, 96–116, and 167–187; these read VELALFAAAFLCGAVAAAAMT, FVAGASGLLALYCLLLLLFWI, GAIGLRIALAISAIAVFLVLV, and TSSWVNLVLWCVVLVLQVVQW. The segment at 198 to 219 is disordered; it reads ERGDPEWSSETDALVGSRLSHS. 2 positions are modified to phosphoserine: Ser206 and Ser214.

It belongs to the TMEM179 family.

The protein localises to the membrane. This Homo sapiens (Human) protein is Transmembrane protein 179B (TMEM179B).